The primary structure comprises 328 residues: Spermatogenesis- and oogenesis-specific basic helix-loop-helix-containing protein 1 (328 aa).

One can recognise a bHLH domain in the interval 53–104 (SCLRRNVISERERRKRMSLSCERLRALLPQFDGRREDMASVLEMSVQFLRLA). The disordered stretch occupies residues 290 to 328 (EAGSALGSDVDDGTSFLLTAGPSSWPGEWGPGFRAGPPA). Residues 310–321 (GPSSWPGEWGPG) are compositionally biased toward low complexity.

As to quaternary structure, forms both hetero- and homodimers with SOHLH2.

The protein resides in the cytoplasm. The protein localises to the nucleus. Its function is as follows. Transcription regulator of both male and female germline differentiation. Suppresses genes involved in spermatogonial stem cells maintenance, and induces genes important for spermatogonial differentiation. Coordinates oocyte differentiation without affecting meiosis I. This chain is Spermatogenesis- and oogenesis-specific basic helix-loop-helix-containing protein 1 (SOHLH1), found in Homo sapiens (Human).